We begin with the raw amino-acid sequence, 354 residues long: Protein OVEREXPRESSOR OF CATIONIC PEROXIDASE 3 (354 aa).

The short motif at 63–70 (NRKGFVSS) is the Nuclear localization signal 1 element. Disordered regions lie at residues 65–98 (KGFV…EDPF) and 151–186 (TGDV…PTKL). The segment covering 154 to 181 (VDVDVDNDDDDNDDDDNDDDDDDSEEDE) has biased composition (acidic residues). The short motif at 191–198 (LKRLAYAL) is the Nuclear localization signal 2 element. A disordered region spans residues 243-264 (KPPVAAPENSSPDPSPVESLSA). Positions 286 to 345 (RWSAQKRVKKAHIETLEKVYRRSKRPTNAVVSSIVQVTNLPRKRVLKWFEDKRAEDGVPD) form a DNA-binding region, homeobox. A Nuclear localization signal 3 motif is present at residues 293-300 (VKKAHIET).

It localises to the nucleus. May modulate chromatin structure by regulation of nucleosome assembly/disassembly. Homeodomain transcription factor that mediates jasmonic acid (JA)-mediated COI1-dependent and abscisic acid (ABA)-mediated PMR4-dependent resistance to infection by necrotrophic fungal pathogens (e.g. B.cinerea and P.cucumerina) and bacterial pathogens (e.g. P.syringae DC3000); this resistance involves at least callose deposition. Required for the P.fluorescens WCS417r-triggered JA-dependent induced systemic resistance (ISR) against both P.syringae DC3000 and H.arabidopsidis. Negative regulator of the ABA-dependent drought resistance. The sequence is that of Protein OVEREXPRESSOR OF CATIONIC PEROXIDASE 3 from Arabidopsis thaliana (Mouse-ear cress).